Consider the following 196-residue polypeptide: Imidazoleglycerol-phosphate dehydratase (196 aa).

It belongs to the imidazoleglycerol-phosphate dehydratase family.

It localises to the cytoplasm. It carries out the reaction D-erythro-1-(imidazol-4-yl)glycerol 3-phosphate = 3-(imidazol-4-yl)-2-oxopropyl phosphate + H2O. Its pathway is amino-acid biosynthesis; L-histidine biosynthesis; L-histidine from 5-phospho-alpha-D-ribose 1-diphosphate: step 6/9. The sequence is that of Imidazoleglycerol-phosphate dehydratase from Zymomonas mobilis subsp. mobilis (strain ATCC 31821 / ZM4 / CP4).